Reading from the N-terminus, the 108-residue chain is MSGSAKYSDWSQVMALIANAAEQNKHQSLLTMLMTPDEREALMARVNICHELLQGDLSQRQISQLLGVGVATITRGSNELKSHTDDEKAWLMEVLEVSAKSDQGARKE.

The DNA-binding element occupies 59-82 (QRQISQLLGVGVATITRGSNELKS).

Belongs to the TrpR family. In terms of assembly, homodimer.

It localises to the cytoplasm. In terms of biological role, this protein is an aporepressor. When complexed with L-tryptophan it binds the operator region of the trp operon and prevents the initiation of transcription. This chain is Trp operon repressor homolog, found in Aliivibrio salmonicida (strain LFI1238) (Vibrio salmonicida (strain LFI1238)).